The chain runs to 106 residues: Nucleoid-associated protein Noc_2594 (106 aa).

Disordered stretches follow at residues 1–20 (MKGG…SNME) and 85–106 (QSKE…KLPL). The span at 10-20 (KQAQQLQSNME) shows a compositional bias: polar residues.

Belongs to the YbaB/EbfC family. In terms of assembly, homodimer.

The protein resides in the cytoplasm. It is found in the nucleoid. Functionally, binds to DNA and alters its conformation. May be involved in regulation of gene expression, nucleoid organization and DNA protection. The protein is Nucleoid-associated protein Noc_2594 of Nitrosococcus oceani (strain ATCC 19707 / BCRC 17464 / JCM 30415 / NCIMB 11848 / C-107).